The primary structure comprises 397 residues: tRNA-specific 2-thiouridylase MnmA (397 aa).

ATP-binding positions include A19–S26 and L45. Residue C113 is the Nucleophile of the active site. A disulfide bridge connects residues C113 and C210. G137 is a binding site for ATP. Positions R160 to Q162 are interaction with tRNA. C210 acts as the Cysteine persulfide intermediate in catalysis.

The protein belongs to the MnmA/TRMU family.

Its subcellular location is the cytoplasm. It catalyses the reaction S-sulfanyl-L-cysteinyl-[protein] + uridine(34) in tRNA + AH2 + ATP = 2-thiouridine(34) in tRNA + L-cysteinyl-[protein] + A + AMP + diphosphate + H(+). Catalyzes the 2-thiolation of uridine at the wobble position (U34) of tRNA, leading to the formation of s(2)U34. The chain is tRNA-specific 2-thiouridylase MnmA from Rhodopseudomonas palustris (strain ATCC BAA-98 / CGA009).